The primary structure comprises 89 residues: Small ribosomal subunit protein bS16 (89 aa).

Belongs to the bacterial ribosomal protein bS16 family.

This chain is Small ribosomal subunit protein bS16, found in Psychrobacter arcticus (strain DSM 17307 / VKM B-2377 / 273-4).